The chain runs to 309 residues: tRNA uridine(34) hydroxylase (309 aa).

In terms of domain architecture, Rhodanese spans 130–224; that stretch reads SDPDTIVIDT…YLEEVPQEES (95 aa). The active-site Cysteine persulfide intermediate is the cysteine 184.

The protein belongs to the TrhO family.

The enzyme catalyses uridine(34) in tRNA + AH2 + O2 = 5-hydroxyuridine(34) in tRNA + A + H2O. Catalyzes oxygen-dependent 5-hydroxyuridine (ho5U) modification at position 34 in tRNAs. The sequence is that of tRNA uridine(34) hydroxylase from Rhizobium etli (strain ATCC 51251 / DSM 11541 / JCM 21823 / NBRC 15573 / CFN 42).